The following is an 82-amino-acid chain: Small ribosomal subunit protein uS17 (82 aa).

It belongs to the universal ribosomal protein uS17 family. As to quaternary structure, part of the 30S ribosomal subunit.

Functionally, one of the primary rRNA binding proteins, it binds specifically to the 5'-end of 16S ribosomal RNA. In Aeromonas hydrophila subsp. hydrophila (strain ATCC 7966 / DSM 30187 / BCRC 13018 / CCUG 14551 / JCM 1027 / KCTC 2358 / NCIMB 9240 / NCTC 8049), this protein is Small ribosomal subunit protein uS17.